Consider the following 459-residue polypeptide: Vacuolar amino acid transporter 5 (459 aa).

8 helical membrane passes run 8-28 (GVLTLLHTACGAGVLAMPFAF), 33-53 (LMPGLITLTFCGICSLCGLLL), 82-102 (VVFDFAIAVKCFGVGVSYLII), 131-151 (FLDRRLYITLIIVFVISPLCF), 161-181 (ASMIAIVSVAYLSGLIIYHFV), 206-226 (LTTLPIFVFAYTCHHNMFSVI), 240-260 (IPIFAIVLAYFLYIIIGGTGY), and 278-298 (SISTTIGRLAMLLLVMLAFPL). Positions 335–351 (FNSEDPQEAPTQQNNEE) are enriched in polar residues. The disordered stretch occupies residues 335–354 (FNSEDPQEAPTQQNNEEPNL). 3 consecutive transmembrane segments (helical) span residues 364-384 (IITLCILLFSYLLAISITSLA), 386-406 (VLAIVGATGSTSISFILPGLF), and 434-454 (LSLFIWGIAVMVASLSAIVFL).

It belongs to the amino acid/polyamine transporter 2 family.

The protein localises to the vacuole membrane. Functionally, probable amino acid transporter of unknown specificity. The sequence is that of Vacuolar amino acid transporter 5 (AVT5) from Saccharomyces cerevisiae (strain ATCC 204508 / S288c) (Baker's yeast).